The chain runs to 341 residues: Cobalt-precorrin-5B C(1)-methyltransferase (341 aa).

Belongs to the CbiD family.

The enzyme catalyses Co-precorrin-5B + S-adenosyl-L-methionine = Co-precorrin-6A + S-adenosyl-L-homocysteine. Its pathway is cofactor biosynthesis; adenosylcobalamin biosynthesis; cob(II)yrinate a,c-diamide from sirohydrochlorin (anaerobic route): step 6/10. Its function is as follows. Catalyzes the methylation of C-1 in cobalt-precorrin-5B to form cobalt-precorrin-6A. The sequence is that of Cobalt-precorrin-5B C(1)-methyltransferase from Picrophilus torridus (strain ATCC 700027 / DSM 9790 / JCM 10055 / NBRC 100828 / KAW 2/3).